A 285-amino-acid polypeptide reads, in one-letter code: ATP synthase gamma chain (285 aa).

The protein belongs to the ATPase gamma chain family. F-type ATPases have 2 components, CF(1) - the catalytic core - and CF(0) - the membrane proton channel. CF(1) has five subunits: alpha(3), beta(3), gamma(1), delta(1), epsilon(1). CF(0) has three main subunits: a, b and c.

The protein resides in the cell membrane. Functionally, produces ATP from ADP in the presence of a proton gradient across the membrane. The gamma chain is believed to be important in regulating ATPase activity and the flow of protons through the CF(0) complex. The polypeptide is ATP synthase gamma chain (Dehalococcoides mccartyi (strain ATCC BAA-2100 / JCM 16839 / KCTC 5957 / BAV1)).